The primary structure comprises 78 residues: Putative defensin-like protein 288 (78 aa).

The N-terminal stretch at 1–21 (MSNLRLTIAVFLAALFQTLWW) is a signal peptide.

This sequence belongs to the DEFL family.

The protein localises to the secreted. This Arabidopsis thaliana (Mouse-ear cress) protein is Putative defensin-like protein 288.